The sequence spans 75 residues: MASPASANMNAVRETMDVLLEISRLLNTGLDMESLSICVRLCEQGINPEALSSVIKELRRASDSLKASENSTSQG.

It belongs to the MOZART1 family. Part of the gamma-tubulin complex.

It is found in the cytoplasm. It localises to the cytoskeleton. The protein resides in the microtubule organizing center. Its subcellular location is the centrosome. The protein localises to the spindle. Required for gamma-tubulin complex recruitment to the centrosome. This chain is Mitotic-spindle organizing protein 1 (mzt1), found in Danio rerio (Zebrafish).